An 88-amino-acid polypeptide reads, in one-letter code: Small ribosomal subunit protein bS20 (88 aa).

A compositionally biased stretch (basic residues) spans 1 to 21 (MANSKSAKKRALQSEKRRQHN). Residues 1–26 (MANSKSAKKRALQSEKRRQHNASRSS) are disordered.

It belongs to the bacterial ribosomal protein bS20 family.

Its function is as follows. Binds directly to 16S ribosomal RNA. The protein is Small ribosomal subunit protein bS20 of Shewanella halifaxensis (strain HAW-EB4).